Here is a 274-residue protein sequence, read N- to C-terminus: MTLQEEIIKELGVKPIIDPKEEIRVSVDFLKDYLKKYPFIKSFVLGISGGQDSSLAGRLAQIAIEEMRQETADASYKFVAVRLPFGVQADEEDAQRALAFIKPDVSLAVNIKAAVEGQVAALNEAGVEVSDFNKGNIKARQRMITQYAVAGQYQGAVLGTDHAAENITGFFTKFGDGGADLLPLFRLNKRQGKALLAELGADPAIYEKVPTADLEEGKPGLADEIALGVTYNDIDDYTEGKVISEDAKAKIEAWWNKTQHKRHLPISIFDDFWK.

Residue 46–53 participates in ATP binding; it reads GISGGQDS. D52 provides a ligand contact to Mg(2+). R140 provides a ligand contact to deamido-NAD(+). T160 contributes to the ATP binding site. E165 is a Mg(2+) binding site. 2 residues coordinate deamido-NAD(+): K173 and D180. ATP-binding residues include K189 and T211. 260–261 provides a ligand contact to deamido-NAD(+); that stretch reads HK.

It belongs to the NAD synthetase family. As to quaternary structure, homodimer.

It carries out the reaction deamido-NAD(+) + NH4(+) + ATP = AMP + diphosphate + NAD(+) + H(+). It functions in the pathway cofactor biosynthesis; NAD(+) biosynthesis; NAD(+) from deamido-NAD(+) (ammonia route): step 1/1. Catalyzes the ATP-dependent amidation of deamido-NAD to form NAD. Uses ammonia as a nitrogen source. The polypeptide is NH(3)-dependent NAD(+) synthetase (Lactococcus lactis subsp. cremoris (strain SK11)).